Consider the following 1432-residue polypeptide: Gag-Pol polyprotein (1432 aa).

Gly2 carries the N-myristoyl glycine; by host lipid modification. The tract at residues 7–31 (ILSGGKLDDWEKIRLRPGGKKQYRI) is interaction with Gp41. Positions 8–43 (LSGGKLDDWEKIRLRPGGKKQYRIKHLVWASRELDR) are interaction with host CALM1. The interval 12–19 (KLDDWEKI) is interaction with host AP3D1. Positions 14 to 33 (DDWEKIRLRPGGKKQYRIKH) are interaction with membrane phosphatidylinositol 4,5-bisphosphate and RNA. The Nuclear export signal motif lies at 16–22 (WEKIRLR). The short motif at 26–32 (KKQYRIK) is the Nuclear localization signal element. The tract at residues 73 to 77 (EEIKS) is interaction with membrane phosphatidylinositol 4,5-bisphosphate. A Phosphotyrosine; by host modification is found at Tyr132. The segment at 189 to 227 (NTIGGHQAAMQMLKDTINEEAAEWDRVHPVHAGPVAPGQ) is interaction with human PPIA/CYPA and NUP153. A dimerization/Multimerization of capsid protein p24 region spans residues 277-363 (YSPVSILDIR…GGPGHKARVL (87 aa)). 2 consecutive CCHC-type zinc fingers follow at residues 389-406 (VKCF…NCRA) and 410-427 (KGCW…DCTE). The tract at residues 443–482 (EAREFSPEQTRANSPTSREPRVRRGDPLPETGAEGQGTVS) is disordered. Polar residues predominate over residues 449-459 (PEQTRANSPTS). A compositionally biased stretch (basic and acidic residues) spans 460 to 469 (REPRVRRGDP). The dimerization of protease stretch occupies residues 486–490 (PQITL). The Peptidase A2 domain occupies 505 to 574 (REALLDTGAD…TPVNIIGRNM (70 aa)). Asp510 (for protease activity; shared with dimeric partner) is an active-site residue. Dimerization of protease regions lie at residues 534 to 540 (GIGGFIK) and 573 to 585 (NMLT…LNFP). Residues 628-818 (EGKISRIGPE…PPFLWMGYEL (191 aa)) form the Reverse transcriptase domain. Mg(2+) contacts are provided by Asp694, Asp769, and Asp770. An RT 'primer grip' region spans residues 811–819 (FLWMGYELH). The short motif at 982–998 (WETWWTDYWQATWIPEW) is the Tryptophan repeat motif element. Residues 1018-1141 (IMGAETFYVD…VDKLVSSGIR (124 aa)) form the RNase H type-1 domain. Residues Asp1027, Glu1062, Asp1082, and Asp1133 each contribute to the Mg(2+) site. The Integrase-type zinc-finger motif lies at 1147–1188 (DGIDKAQEEHEKYHSNWRAMASDFNLPPVVAKEIVASCDKCQ). 4 residues coordinate Zn(2+): His1156, His1160, Cys1184, and Cys1187. Positions 1198 to 1348 (VDCSPGIWQL…SAGERIIDII (151 aa)) constitute an Integrase catalytic domain. Positions 1208, 1260, and 1296 each coordinate Mg(2+). Residues 1367-1414 (FRVYYRDSRDPIWKGPAKLLWKGEGAVVIQDNSEIKVVPRRKAKIIRD) constitute a DNA-binding region (integrase-type).

Homotrimer; further assembles as hexamers of trimers. Interacts with gp41 (via C-terminus). Interacts with host CALM1; this interaction induces a conformational change in the Matrix protein, triggering exposure of the myristate group. Interacts with host AP3D1; this interaction allows the polyprotein trafficking to multivesicular bodies during virus assembly. Part of the pre-integration complex (PIC) which is composed of viral genome, matrix protein, Vpr and integrase. As to quaternary structure, homodimer; the homodimer further multimerizes as homohexamers or homopentamers. Interacts with human PPIA/CYPA; This interaction stabilizes the capsid. Interacts with human NUP153. Interacts with host PDZD8; this interaction stabilizes the capsid. Interacts with monkey TRIM5; this interaction destabilizes the capsid. In terms of assembly, homodimer, whose active site consists of two apposed aspartic acid residues. Heterodimer of p66 RT and p51 RT (RT p66/p51). Heterodimerization of RT is essential for DNA polymerase activity. The overall folding of the subdomains is similar in p66 RT and p51 RT but the spatial arrangements of the subdomains are dramatically different. As to quaternary structure, homotetramer; may further associate as a homohexadecamer. Part of the pre-integration complex (PIC) which is composed of viral genome, matrix protein, Vpr and integrase. Interacts with human SMARCB1/INI1 and human PSIP1/LEDGF isoform 1. Interacts with human KPNA3; this interaction might play a role in nuclear import of the pre-integration complex. Interacts with human NUP153; this interaction might play a role in nuclear import of the pre-integration complex. It depends on Mg(2+) as a cofactor. Specific enzymatic cleavages by the viral protease yield mature proteins. The protease is released by autocatalytic cleavage. The polyprotein is cleaved during and after budding, this process is termed maturation. Proteolytic cleavage of p66 RT removes the RNase H domain to yield the p51 RT subunit. Nucleocapsid protein p7 might be further cleaved after virus entry. Post-translationally, tyrosine phosphorylated presumably in the virion by a host kinase. Phosphorylation is apparently not a major regulator of membrane association. In terms of processing, phosphorylated possibly by host MAPK1; this phosphorylation is necessary for Pin1-mediated virion uncoating. Methylated by host PRMT6, impairing its function by reducing RNA annealing and the initiation of reverse transcription.

Its subcellular location is the host cell membrane. The protein resides in the host endosome. The protein localises to the host multivesicular body. It is found in the virion membrane. It localises to the host nucleus. Its subcellular location is the host cytoplasm. The protein resides in the virion. It catalyses the reaction Specific for a P1 residue that is hydrophobic, and P1' variable, but often Pro.. It carries out the reaction Endohydrolysis of RNA in RNA/DNA hybrids. Three different cleavage modes: 1. sequence-specific internal cleavage of RNA. Human immunodeficiency virus type 1 and Moloney murine leukemia virus enzymes prefer to cleave the RNA strand one nucleotide away from the RNA-DNA junction. 2. RNA 5'-end directed cleavage 13-19 nucleotides from the RNA end. 3. DNA 3'-end directed cleavage 15-20 nucleotides away from the primer terminus.. The catalysed reaction is 3'-end directed exonucleolytic cleavage of viral RNA-DNA hybrid.. The enzyme catalyses DNA(n) + a 2'-deoxyribonucleoside 5'-triphosphate = DNA(n+1) + diphosphate. Its activity is regulated as follows. Protease: The viral protease is inhibited by many synthetic protease inhibitors (PIs), such as amprenavir, atazanavir, indinavir, loprinavir, nelfinavir, ritonavir and saquinavir. Use of protease inhibitors in tritherapy regimens permit more ambitious therapeutic strategies. Reverse transcriptase/ribonuclease H: RT can be inhibited either by nucleoside RT inhibitors (NRTIs) or by non nucleoside RT inhibitors (NNRTIs). NRTIs act as chain terminators, whereas NNRTIs inhibit DNA polymerization by binding a small hydrophobic pocket near the RT active site and inducing an allosteric change in this region. Classical NRTIs are abacavir, adefovir (PMEA), didanosine (ddI), lamivudine (3TC), stavudine (d4T), tenofovir (PMPA), zalcitabine (ddC), and zidovudine (AZT). Classical NNRTIs are atevirdine (BHAP U-87201E), delavirdine, efavirenz (DMP-266), emivirine (I-EBU), and nevirapine (BI-RG-587). The tritherapies used as a basic effective treatment of AIDS associate two NRTIs and one NNRTI. Mediates, with Gag polyprotein, the essential events in virion assembly, including binding the plasma membrane, making the protein-protein interactions necessary to create spherical particles, recruiting the viral Env proteins, and packaging the genomic RNA via direct interactions with the RNA packaging sequence (Psi). Gag-Pol polyprotein may regulate its own translation, by the binding genomic RNA in the 5'-UTR. At low concentration, the polyprotein would promote translation, whereas at high concentration, the polyprotein would encapsidate genomic RNA and then shut off translation. Functionally, targets the polyprotein to the plasma membrane via a multipartite membrane-binding signal, that includes its myristoylated N-terminus. Matrix protein is part of the pre-integration complex. Implicated in the release from host cell mediated by Vpu. Binds to RNA. Its function is as follows. Forms the conical core that encapsulates the genomic RNA-nucleocapsid complex in the virion. Most core are conical, with only 7% tubular. The core is constituted by capsid protein hexamer subunits. The core is disassembled soon after virion entry. Host restriction factors such as TRIM5-alpha or TRIMCyp bind retroviral capsids and cause premature capsid disassembly, leading to blocks in reverse transcription. Capsid restriction by TRIM5 is one of the factors which restricts HIV-1 to the human species. Host PIN1 apparently facilitates the virion uncoating. On the other hand, interactions with PDZD8 or CYPA stabilize the capsid. In terms of biological role, encapsulates and protects viral dimeric unspliced genomic RNA (gRNA). Binds these RNAs through its zinc fingers. Acts as a nucleic acid chaperone which is involved in rearangement of nucleic acid secondary structure during gRNA retrotranscription. Also facilitates template switch leading to recombination. As part of the polyprotein, participates in gRNA dimerization, packaging, tRNA incorporation and virion assembly. Aspartyl protease that mediates proteolytic cleavages of Gag and Gag-Pol polyproteins during or shortly after the release of the virion from the plasma membrane. Cleavages take place as an ordered, step-wise cascade to yield mature proteins. This process is called maturation. Displays maximal activity during the budding process just prior to particle release from the cell. Also cleaves Nef and Vif, probably concomitantly with viral structural proteins on maturation of virus particles. Hydrolyzes host EIF4GI and PABP1 in order to shut off the capped cellular mRNA translation. The resulting inhibition of cellular protein synthesis serves to ensure maximal viral gene expression and to evade host immune response. Also mediates cleavage of host YTHDF3. Mediates cleavage of host CARD8, thereby activating the CARD8 inflammasome, leading to the clearance of latent HIV-1 in patient CD4(+) T-cells after viral reactivation; in contrast, HIV-1 can evade CARD8-sensing when its protease remains inactive in infected cells prior to viral budding. Functionally, multifunctional enzyme that converts the viral RNA genome into dsDNA in the cytoplasm, shortly after virus entry into the cell. This enzyme displays a DNA polymerase activity that can copy either DNA or RNA templates, and a ribonuclease H (RNase H) activity that cleaves the RNA strand of RNA-DNA heteroduplexes in a partially processive 3' to 5' endonucleasic mode. Conversion of viral genomic RNA into dsDNA requires many steps. A tRNA(3)-Lys binds to the primer-binding site (PBS) situated at the 5'-end of the viral RNA. RT uses the 3' end of the tRNA primer to perform a short round of RNA-dependent minus-strand DNA synthesis. The reading proceeds through the U5 region and ends after the repeated (R) region which is present at both ends of viral RNA. The portion of the RNA-DNA heteroduplex is digested by the RNase H, resulting in a ssDNA product attached to the tRNA primer. This ssDNA/tRNA hybridizes with the identical R region situated at the 3' end of viral RNA. This template exchange, known as minus-strand DNA strong stop transfer, can be either intra- or intermolecular. RT uses the 3' end of this newly synthesized short ssDNA to perform the RNA-dependent minus-strand DNA synthesis of the whole template. RNase H digests the RNA template except for two polypurine tracts (PPTs) situated at the 5'-end and near the center of the genome. It is not clear if both polymerase and RNase H activities are simultaneous. RNase H probably can proceed both in a polymerase-dependent (RNA cut into small fragments by the same RT performing DNA synthesis) and a polymerase-independent mode (cleavage of remaining RNA fragments by free RTs). Secondly, RT performs DNA-directed plus-strand DNA synthesis using the PPTs that have not been removed by RNase H as primers. PPTs and tRNA primers are then removed by RNase H. The 3' and 5' ssDNA PBS regions hybridize to form a circular dsDNA intermediate. Strand displacement synthesis by RT to the PBS and PPT ends produces a blunt ended, linear dsDNA copy of the viral genome that includes long terminal repeats (LTRs) at both ends. Its function is as follows. Catalyzes viral DNA integration into the host chromosome, by performing a series of DNA cutting and joining reactions. This enzyme activity takes place after virion entry into a cell and reverse transcription of the RNA genome in dsDNA. The first step in the integration process is 3' processing. This step requires a complex comprising the viral genome, matrix protein, Vpr and integrase. This complex is called the pre-integration complex (PIC). The integrase protein removes 2 nucleotides from each 3' end of the viral DNA, leaving recessed CA OH's at the 3' ends. In the second step, the PIC enters cell nucleus. This process is mediated through integrase and Vpr proteins, and allows the virus to infect a non dividing cell. This ability to enter the nucleus is specific of lentiviruses, other retroviruses cannot and rely on cell division to access cell chromosomes. In the third step, termed strand transfer, the integrase protein joins the previously processed 3' ends to the 5' ends of strands of target cellular DNA at the site of integration. The 5'-ends are produced by integrase-catalyzed staggered cuts, 5 bp apart. A Y-shaped, gapped, recombination intermediate results, with the 5'-ends of the viral DNA strands and the 3' ends of target DNA strands remaining unjoined, flanking a gap of 5 bp. The last step is viral DNA integration into host chromosome. This involves host DNA repair synthesis in which the 5 bp gaps between the unjoined strands are filled in and then ligated. Since this process occurs at both cuts flanking the HIV genome, a 5 bp duplication of host DNA is produced at the ends of HIV-1 integration. Alternatively, Integrase may catalyze the excision of viral DNA just after strand transfer, this is termed disintegration. The polypeptide is Gag-Pol polyprotein (gag-pol) (Homo sapiens (Human)).